The following is a 98-amino-acid chain: NADH-ubiquinone oxidoreductase chain 4L (98 aa).

The next 3 membrane-spanning stretches (helical) occupy residues Pro-2–Phe-22, Ser-29–Leu-49, and Ile-61–Val-81.

It belongs to the complex I subunit 4L family. In terms of assembly, core subunit of respiratory chain NADH dehydrogenase (Complex I) which is composed of 45 different subunits.

It localises to the mitochondrion inner membrane. The enzyme catalyses a ubiquinone + NADH + 5 H(+)(in) = a ubiquinol + NAD(+) + 4 H(+)(out). Functionally, core subunit of the mitochondrial membrane respiratory chain NADH dehydrogenase (Complex I) which catalyzes electron transfer from NADH through the respiratory chain, using ubiquinone as an electron acceptor. Part of the enzyme membrane arm which is embedded in the lipid bilayer and involved in proton translocation. In Lemur catta (Ring-tailed lemur), this protein is NADH-ubiquinone oxidoreductase chain 4L (MT-ND4L).